Here is a 116-residue protein sequence, read N- to C-terminus: Ribosome-binding factor A (116 aa).

Belongs to the RbfA family. As to quaternary structure, monomer. Binds 30S ribosomal subunits, but not 50S ribosomal subunits or 70S ribosomes.

It localises to the cytoplasm. One of several proteins that assist in the late maturation steps of the functional core of the 30S ribosomal subunit. Associates with free 30S ribosomal subunits (but not with 30S subunits that are part of 70S ribosomes or polysomes). Required for efficient processing of 16S rRNA. May interact with the 5'-terminal helix region of 16S rRNA. The chain is Ribosome-binding factor A from Streptococcus mutans serotype c (strain ATCC 700610 / UA159).